The primary structure comprises 205 residues: MASDHQTQAGKPQPLNPKIIIFEQENFQGHSHELNGPCPNLKETGVEKAGSVLVQAGPWVGYEQANCKGEQFVFEKGEYPRWDSWTSSRRTDSLSSLRPIKVDSQEHKIILYENPNFTGKKMEIIDDDVPSFHAHGYQEKVSSVRVQSGTWVGYQYPGYRGLQYLLEKGDYKDSSDFGAPHPQVQSVRRIRDMQWHQRGAFHPTN.

Position 2 is an N-acetylalanine (A2). Positions 2-16 (ASDHQTQAGKPQPLN) are N-terminal arm. Beta/gamma crystallin 'Greek key' domains are found at residues 17–56 (PKIIIFEQENFQGHSHELNGPCPNLKETGVEKAGSVLVQA) and 57–101 (GPWV…RPIK). The tract at residues 102–106 (VDSQE) is connecting peptide. Beta/gamma crystallin 'Greek key' domains are found at residues 107–148 (HKII…RVQS) and 149–191 (GTWV…RRIR). A C-terminal arm region spans residues 193–205 (MQWHQRGAFHPTN).

Belongs to the beta/gamma-crystallin family. Homo/heterodimer, or complexes of higher-order. The structure of beta-crystallin oligomers seems to be stabilized through interactions between the N-terminal arms.

Its function is as follows. Crystallins are the dominant structural components of the vertebrate eye lens. The chain is Beta-crystallin B2 (CRYBB2) from Oryctolagus cuniculus (Rabbit).